Here is a 797-residue protein sequence, read N- to C-terminus: MLNYQCLETDSYCGTSHIELDGIHIYIDPGSDDSLKHPEVPEQPDLILLSHSDLAHIGGLVYAYYKYDWKNAYIYATLPTINMGRMTMLDAIKSNYISDMSKADVDAVFDSIIPLRYQQPTLLLGKCSGLTITAYNAGHTLGGTLWSLIKESESVLYAVDWNHSKDKHLNGAALYSNGHILEALNRPNTLITDANNSLVSIPSRKKRDEAFIESVMSSLLKGGTVLLPVDAASRVLELCCILDNHWSASQPPLPFPILFLSPTSTKTIDYAKSMIEWMGDNIVRDFGINENLLEFRNINTITDFSQISHIGPGPKVILATALTLECGFSQRILLDLMSENSNDLILFTQRSRCPQNSLANQFIRYWERASKKKRDIPHPVGLYAEQAVKIKTKEPLEGEELRSYQELEFSKRNKDAEDTALEFRNRTILDEDLSSSSSSEDDDLDLNTEVPHVALGSSAFLMGKSFDLNLRDPAVQALHTKYKMFPYIEKRRRIDEYGEIIKHQDFSMINEPANTLELENDSDDNALSNSNGKRKWSEINDGLQQKKEEEDEDEVPSKIITDEKTIRVSCQVQFIDIEGLHDGRSLKTIIPQVNPRRLVLIHASTEEKEDMKKTCASLSAFTKDVYIPNYGEIINVSIDVNAFSLKLADDLIKNLIWTKVGNCEVSHMLAKVEISKPSEEEDKKEEVEKKDGDKERNEEKKEEKETLPVLNALTLRSDLARAPRAAPLLVGNIRLAYLRKALLDQGISAELKGEGVLLCGGAVAVRKLSGGKISVEGSLSNRFFEIRKLVYDALAVV.

2 disordered regions span residues 519-557 (ENDS…EVPS) and 677-703 (PSEE…KKEE). Residues 684-703 (KEEVEKKDGDKERNEEKKEE) are compositionally biased toward basic and acidic residues.

As to quaternary structure, component of the cleavage and polyadenylation factor (CPF) complex, which is composed of cft1, cft2, ysh1, pta1, swd2, pfs2, dis2, yth1, ssu72, and fip1.

Its subcellular location is the nucleus. RNA-binding component of the cleavage and polyadenylation factor (CPF) complex, which plays a key role in polyadenylation-dependent pre-mRNA 3'-end formation and cooperates with cleavage factors including the CFIA complex and NAB4/CFIB. May be involved in poly(A)-site recognition. May be involved in the association of the CPF, CPFIA and RNA polymerase II complexes. The sequence is that of Cleavage factor two protein 2 (cft2) from Schizosaccharomyces pombe (strain 972 / ATCC 24843) (Fission yeast).